Reading from the N-terminus, the 333-residue chain is uncharacterized protein (333 aa).

This is an uncharacterized protein from Mycolicibacterium smegmatis (Mycobacterium smegmatis).